Here is a 276-residue protein sequence, read N- to C-terminus: Potassium/proton antiporter CemA (276 aa).

The next 3 membrane-spanning stretches (helical) occupy residues 59-79 (LLLL…WIFG), 199-219 (FFII…GWEV), and 236-256 (FIFL…KYWI).

This sequence belongs to the CemA family.

It localises to the plastid. The protein resides in the chloroplast inner membrane. The catalysed reaction is K(+)(in) + H(+)(out) = K(+)(out) + H(+)(in). Contributes to K(+)/H(+) antiport activity by supporting proton efflux to control proton extrusion and homeostasis in chloroplasts in a light-dependent manner to modulate photosynthesis. Prevents excessive induction of non-photochemical quenching (NPQ) under continuous-light conditions. Indirectly promotes efficient inorganic carbon uptake into chloroplasts. The protein is Potassium/proton antiporter CemA of Cyanidioschyzon merolae (strain NIES-3377 / 10D) (Unicellular red alga).